Reading from the N-terminus, the 315-residue chain is MTDMLTTSRRPETPGQFLVAALYHFISFPRFADFREPLQAICDANGVKGTLLLAHEGINGTIAGSEEGIATVLAFLRAQPEFADLVHKESRASAMPFLRMKVRLKKEIVTMGVENIDPKKVVGTYVEPKDWNALISDPETLVIDTRNDYETAIGVFQGAVDPKTKTFREFPEWVRNNSGLHNKPKIAMYCTGGIRCEKATAFMKEQGFEEVYHLKGGILKYLEEIPPEESLWEGACFVFDERVSVTHGLQEGEHTLCHACRQPLTTEDLRSPLHEEGVSCVNCHDTRTEEDRERYRQRQRQIVLAKKRGARHLGS.

In terms of domain architecture, Rhodanese spans S136–S230. The active-site Cysteine persulfide intermediate is C190.

Belongs to the TrhO family.

It carries out the reaction uridine(34) in tRNA + AH2 + O2 = 5-hydroxyuridine(34) in tRNA + A + H2O. In terms of biological role, catalyzes oxygen-dependent 5-hydroxyuridine (ho5U) modification at position 34 in tRNAs. The sequence is that of tRNA uridine(34) hydroxylase from Sinorhizobium medicae (strain WSM419) (Ensifer medicae).